Consider the following 478-residue polypeptide: MVDSSKAPLPFRDSALSFKREYAESLDAQDPLREFRNQFIIPSKADLKRKSLAVAEGESPSSDCIYLCGNSLGLQPKNARMYIDRFLQTWATKAVLGHFTKLEDSPFPPYMDYDDVTSKLMAQVVGALPSEVAVMSTLTGNLHLLMASFYRPTKEKYKIILEGKAFPSDHYAVESQIRHHGFDPKDAMVLIEPKDLKEPVLPTERILKTIDEHASSTALILLPGIQYYSGQYLDIPTITAHAHSKGLLIGWDCAHAAGNVELKLHDWDVDFAAWCTYKYVNSGPGSMGALFVHEKHGQVNLENKEDPYRHRLTGWWGGDKSLRFLMDNNFVPRPGAAGFQLSNPSVLDMTAVLSSLDIFDKATMPALRKKSLELTAYLEHLLLNSPEGVRPSDDPFSIITPSDPEARGAQLSVLLKPGLLDSVFSHLVDNGVILDERKPDVIRVAPAPLYNTFTDVWDFVQIFFDACRKAAQEKDTTS.

Residues Leu-138, Thr-139, Phe-166–Asp-169, Asp-252, His-255, and Tyr-277 contribute to the pyridoxal 5'-phosphate site. Position 278 is an N6-(pyridoxal phosphate)lysine (Lys-278). Positions 315 and 343 each coordinate pyridoxal 5'-phosphate.

The protein belongs to the kynureninase family. In terms of assembly, homodimer. The cofactor is pyridoxal 5'-phosphate.

It is found in the cytoplasm. It carries out the reaction L-kynurenine + H2O = anthranilate + L-alanine + H(+). The enzyme catalyses 3-hydroxy-L-kynurenine + H2O = 3-hydroxyanthranilate + L-alanine + H(+). The protein operates within amino-acid degradation; L-kynurenine degradation; L-alanine and anthranilate from L-kynurenine: step 1/1. Its pathway is cofactor biosynthesis; NAD(+) biosynthesis; quinolinate from L-kynurenine: step 2/3. Functionally, catalyzes the cleavage of L-kynurenine (L-Kyn) and L-3-hydroxykynurenine (L-3OHKyn) into anthranilic acid (AA) and 3-hydroxyanthranilic acid (3-OHAA), respectively. This Coccidioides immitis (strain RS) (Valley fever fungus) protein is Kynureninase.